Here is a 91-residue protein sequence, read N- to C-terminus: YcgL domain-containing protein Sde_1339 (91 aa).

The YcgL domain maps to Met1 to Pro85. A disordered region spans residues Gln72–Arg91.

This Saccharophagus degradans (strain 2-40 / ATCC 43961 / DSM 17024) protein is YcgL domain-containing protein Sde_1339.